The sequence spans 342 residues: tRNA N6-adenosine threonylcarbamoyltransferase (342 aa).

Fe cation-binding residues include H114 and H118. Substrate contacts are provided by residues 136-140, D169, G182, D186, and N275; that span reads LVSGG. D301 lines the Fe cation pocket.

This sequence belongs to the KAE1 / TsaD family. Fe(2+) serves as cofactor.

The protein localises to the cytoplasm. The enzyme catalyses L-threonylcarbamoyladenylate + adenosine(37) in tRNA = N(6)-L-threonylcarbamoyladenosine(37) in tRNA + AMP + H(+). Its function is as follows. Required for the formation of a threonylcarbamoyl group on adenosine at position 37 (t(6)A37) in tRNAs that read codons beginning with adenine. Is involved in the transfer of the threonylcarbamoyl moiety of threonylcarbamoyl-AMP (TC-AMP) to the N6 group of A37, together with TsaE and TsaB. TsaD likely plays a direct catalytic role in this reaction. The chain is tRNA N6-adenosine threonylcarbamoyltransferase from Streptococcus pyogenes serotype M4 (strain MGAS10750).